The following is a 222-amino-acid chain: Peptide methionine sulfoxide reductase MsrA 2 (222 aa).

C56 is a catalytic residue.

It belongs to the MsrA Met sulfoxide reductase family.

It catalyses the reaction L-methionyl-[protein] + [thioredoxin]-disulfide + H2O = L-methionyl-(S)-S-oxide-[protein] + [thioredoxin]-dithiol. It carries out the reaction [thioredoxin]-disulfide + L-methionine + H2O = L-methionine (S)-S-oxide + [thioredoxin]-dithiol. Its function is as follows. Has an important function as a repair enzyme for proteins that have been inactivated by oxidation. Catalyzes the reversible oxidation-reduction of methionine sulfoxide in proteins to methionine. The chain is Peptide methionine sulfoxide reductase MsrA 2 (msrA2) from Nostoc sp. (strain PCC 7120 / SAG 25.82 / UTEX 2576).